A 424-amino-acid polypeptide reads, in one-letter code: Phosphoribosylamine--glycine ligase (424 aa).

Residues 111 to 312 (KAFVKECGIK…LLDLCLATAK (202 aa)) form the ATP-grasp domain. ATP is bound at residue 137-189 (IQNASFPLVIKALNKNTSIVYQEEEAIKILEDAFKQSNEPVIIEPFLEGFELS).

The protein belongs to the GARS family.

The enzyme catalyses 5-phospho-beta-D-ribosylamine + glycine + ATP = N(1)-(5-phospho-beta-D-ribosyl)glycinamide + ADP + phosphate + H(+). Its pathway is purine metabolism; IMP biosynthesis via de novo pathway; N(1)-(5-phospho-D-ribosyl)glycinamide from 5-phospho-alpha-D-ribose 1-diphosphate: step 2/2. The chain is Phosphoribosylamine--glycine ligase (purD) from Helicobacter pylori (strain ATCC 700392 / 26695) (Campylobacter pylori).